Consider the following 356-residue polypeptide: Histidinol-phosphate aminotransferase (356 aa).

The residue at position 214 (K214) is an N6-(pyridoxal phosphate)lysine.

This sequence belongs to the class-II pyridoxal-phosphate-dependent aminotransferase family. Histidinol-phosphate aminotransferase subfamily. In terms of assembly, homodimer. Requires pyridoxal 5'-phosphate as cofactor.

The catalysed reaction is L-histidinol phosphate + 2-oxoglutarate = 3-(imidazol-4-yl)-2-oxopropyl phosphate + L-glutamate. It participates in amino-acid biosynthesis; L-histidine biosynthesis; L-histidine from 5-phospho-alpha-D-ribose 1-diphosphate: step 7/9. This chain is Histidinol-phosphate aminotransferase, found in Aromatoleum aromaticum (strain DSM 19018 / LMG 30748 / EbN1) (Azoarcus sp. (strain EbN1)).